Consider the following 81-residue polypeptide: MAAHKKSHIRIFFVSVMIILSLFSGFGEGQTYINYNGMKGDIIPGCSSKNPKECVKIPAYSYNRGCEISTRCQRQQHSSSS.

The signal sequence occupies residues 1-29; that stretch reads MAAHKKSHIRIFFVSVMIILSLFSGFGEG. Cystine bridges form between C46/C54 and C66/C72.

The protein belongs to the plant rapid alkalinization factor (RALF) family.

The protein localises to the secreted. In terms of biological role, cell signaling peptide that may regulate plant stress, growth, and development. Mediates a rapid alkalinization of extracellular space by mediating a transient increase in the cytoplasmic Ca(2+) concentration leading to a calcium-dependent signaling events through a cell surface receptor and a concomitant activation of some intracellular mitogen-activated protein kinases. The polypeptide is Protein RALF-like 6 (RALFL6) (Arabidopsis thaliana (Mouse-ear cress)).